The chain runs to 180 residues: MFPMLTGFISYGQQTIRAARYIGQSFIITLSHTNRLPITIHYPYEKSITSERFRGRIHFEFDKCIACEVCVRVCPIDLPLVDWRFEKDIKRKQLLNYSIDFGVCIFCGNCVEYCPTNCLSMTEEYELSTYDRHELNYNQIALSRLPISIMGDYTIQTIRNSPQSKIDEEKSWNSRTITDY.

4Fe-4S ferredoxin-type domains lie at Gly-55–Arg-84 and Leu-95–Glu-124. Residues Cys-64, Cys-67, Cys-70, Cys-74, Cys-104, Cys-107, Cys-110, and Cys-114 each coordinate [4Fe-4S] cluster.

The protein belongs to the complex I 23 kDa subunit family. NDH is composed of at least 16 different subunits, 5 of which are encoded in the nucleus. [4Fe-4S] cluster is required as a cofactor.

It localises to the plastid. Its subcellular location is the chloroplast thylakoid membrane. The catalysed reaction is a plastoquinone + NADH + (n+1) H(+)(in) = a plastoquinol + NAD(+) + n H(+)(out). It carries out the reaction a plastoquinone + NADPH + (n+1) H(+)(in) = a plastoquinol + NADP(+) + n H(+)(out). Functionally, NDH shuttles electrons from NAD(P)H:plastoquinone, via FMN and iron-sulfur (Fe-S) centers, to quinones in the photosynthetic chain and possibly in a chloroplast respiratory chain. The immediate electron acceptor for the enzyme in this species is believed to be plastoquinone. Couples the redox reaction to proton translocation, and thus conserves the redox energy in a proton gradient. The sequence is that of NAD(P)H-quinone oxidoreductase subunit I, chloroplastic from Zea mays (Maize).